The following is a 344-amino-acid chain: tRNA N6-adenosine threonylcarbamoyltransferase (344 aa).

His-111 and His-115 together coordinate Fe cation. Residues 134–138, Asp-167, Gly-180, and Asn-277 each bind substrate; that span reads LVSGG. Fe cation is bound at residue Asp-305.

It belongs to the KAE1 / TsaD family. Fe(2+) is required as a cofactor.

The protein resides in the cytoplasm. It carries out the reaction L-threonylcarbamoyladenylate + adenosine(37) in tRNA = N(6)-L-threonylcarbamoyladenosine(37) in tRNA + AMP + H(+). In terms of biological role, required for the formation of a threonylcarbamoyl group on adenosine at position 37 (t(6)A37) in tRNAs that read codons beginning with adenine. Is involved in the transfer of the threonylcarbamoyl moiety of threonylcarbamoyl-AMP (TC-AMP) to the N6 group of A37, together with TsaE and TsaB. TsaD likely plays a direct catalytic role in this reaction. The chain is tRNA N6-adenosine threonylcarbamoyltransferase from Glaesserella parasuis serovar 5 (strain SH0165) (Haemophilus parasuis).